Consider the following 290-residue polypeptide: Glutamate 5-kinase (290 aa).

ATP is bound at residue lysine 21. The substrate site is built by serine 60, aspartate 151, and asparagine 163. 217–223 (TGGMFTK) provides a ligand contact to ATP.

Belongs to the glutamate 5-kinase family.

It is found in the cytoplasm. The enzyme catalyses L-glutamate + ATP = L-glutamyl 5-phosphate + ADP. It participates in amino-acid biosynthesis; L-proline biosynthesis; L-glutamate 5-semialdehyde from L-glutamate: step 1/2. Functionally, catalyzes the transfer of a phosphate group to glutamate to form L-glutamate 5-phosphate. The chain is Glutamate 5-kinase from Leptospira interrogans serogroup Icterohaemorrhagiae serovar copenhageni (strain Fiocruz L1-130).